A 59-amino-acid polypeptide reads, in one-letter code: uncharacterized protein (59 aa).

Its subcellular location is the mitochondrion. This is an uncharacterized protein from Ascobolus immersus.